A 365-amino-acid chain; its full sequence is Sulfate/thiosulfate import ATP-binding protein CysA (365 aa).

An ABC transporter domain is found at 3–237 (IEIANIKKSF…PATRFVLEFM (235 aa)). 35–42 (GPSGSGKT) is an ATP binding site.

It belongs to the ABC transporter superfamily. Sulfate/tungstate importer (TC 3.A.1.6) family. In terms of assembly, the complex is composed of two ATP-binding proteins (CysA), two transmembrane proteins (CysT and CysW) and a solute-binding protein (CysP).

The protein resides in the cell inner membrane. It carries out the reaction sulfate(out) + ATP + H2O = sulfate(in) + ADP + phosphate + H(+). The catalysed reaction is thiosulfate(out) + ATP + H2O = thiosulfate(in) + ADP + phosphate + H(+). Part of the ABC transporter complex CysAWTP involved in sulfate/thiosulfate import. Responsible for energy coupling to the transport system. The sequence is that of Sulfate/thiosulfate import ATP-binding protein CysA from Escherichia coli (strain K12).